A 705-amino-acid chain; its full sequence is Complement C1r subcomponent (705 aa).

Residues methionine 1–glycine 17 form the signal peptide. The region spanning serine 18–valine 141 is the CUB 1 domain. Ca(2+) is bound by residues glutamate 66, aspartate 74, and aspartate 119. Cysteines 71 and 89 form a disulfide. Asparagine 125 carries an N-linked (GlcNAc...) asparagine glycan. Ca(2+) contacts are provided by aspartate 142, leucine 143, and glutamate 145. The EGF-like; calcium-binding domain occupies aspartate 142 to glutamine 190. 4 disulfide bridges follow: cysteine 146/cysteine 165, cysteine 161/cysteine 174, cysteine 176/cysteine 189, and cysteine 193/cysteine 220. Residues asparagine 167, tyrosine 168, and glycine 171 each coordinate Ca(2+). Asparagine 167 bears the (3R)-3-hydroxyasparagine mark. The 113-residue stretch at cysteine 193–glutamate 305 folds into the CUB 2 domain. Position 206 is a phosphoserine; by CK2 (serine 206). Asparagine 221 carries an N-linked (GlcNAc...) asparagine glycan. 4 residues coordinate Ca(2+): aspartate 243, aspartate 253, aspartate 290, and aspartate 294. Cysteine 250 and cysteine 268 are disulfide-bonded. Sushi domains are found at residues isoleucine 307–isoleucine 373 and lysine 374–proline 449. 5 cysteine pairs are disulfide-bonded: cysteine 309–cysteine 358, cysteine 338–cysteine 371, cysteine 376–cysteine 429, cysteine 406–cysteine 447, and cysteine 451–cysteine 577. The region spanning isoleucine 464–glutamate 702 is the Peptidase S1 domain. Residue histidine 502 is the Charge relay system of the active site. Asparagine 514 carries N-linked (GlcNAc...) asparagine glycosylation. Aspartate 557 serves as the catalytic Charge relay system. Asparagine 581 is a glycosylation site (N-linked (GlcNAc...) asparagine). 2 disulfide bridges follow: cysteine 620–cysteine 639 and cysteine 650–cysteine 680. The Charge relay system role is filled by serine 654.

It belongs to the peptidase S1 family. Core component of the complement C1 complex, a calcium-dependent complex composed of 1 molecule of the C1Q subcomplex, 2 molecules of C1R and 2 molecules of C1S. The C1Q subcomplex is composed 18 subunits: 3 chains of C1QA, C1QB, and C1QC trimerize to form 6 collagen-like triple helices connected to six globular ligand-recognition modules. Within the C1 complex, C1R is a dimer of identical chains, each of which is activated by cleavage into two chains, heavy and light, connected by disulfide bonds. In terms of processing, cleaved and activated by autocatalytic processing to generate Complement C1r subcomponent heavy and light chains that are connected by disulfide bonds. The iron and 2-oxoglutarate dependent 3-hydroxylation of aspartate and asparagine is (R) stereospecific within EGF domains.

It is found in the secreted. The protein localises to the cell surface. It catalyses the reaction Selective cleavage of Lys(or Arg)-|-Ile bond in complement subcomponent C1s to form the active form of C1s (EC 3.4.21.42).. With respect to regulation, activated by the C1Q subcomplex of the C1 complex following C1Q binding to immunoglobulins (IgG or IgM) complexed with antigens to form antigen-antibody complexes on the surface of pathogens. Immunoglobulin-binding promotes autoactivation of C1R, which results in the cleavage of the Arg-Ile bond in the catalytic domain. Functionally, serine protease component of the complement C1 complex, a multiprotein complex that initiates the classical pathway of the complement system, a cascade of proteins that leads to phagocytosis and breakdown of pathogens and signaling that strengthens the adaptive immune system. C1R catalyzes the first enzymatic step in the classical complement pathway: it is activated by the C1Q subcomplex of the C1 complex, which associates with IgG or IgM immunoglobulins complexed with antigens to form antigen-antibody complexes on the surface of pathogens. Immunoglobulin-binding promotes the autocatalytic cleavage and activation of C1R. Activated C1R then cleaves and activates C1S, the second protease of the classical complement pathway. It is unclear if C1R activates C1S within single, strained C1 complexes or between neighboring C1 complexes on surfaces. The polypeptide is Complement C1r subcomponent (Homo sapiens (Human)).